Consider the following 315-residue polypeptide: Long form salivary protein D7L1 (315 aa).

Residues Met-1–Ala-18 form the signal peptide. Cystine bridges form between Cys-37-Cys-73 and Cys-69-Cys-128. Position 55 (Trp-55) interacts with thromboxane A2. A leukotriene C4-binding site is contributed by Trp-58. Tyr-70 provides a ligand contact to thromboxane A2. Residues Gly-152 and Lys-170 each contribute to the leukotriene C4 site. Lys-170 serves as a coordination point for thromboxane A2. Disulfide bonds link Cys-178/Cys-211 and Cys-252/Cys-263.

The protein belongs to the PBP/GOBP family. Distal-lateral and median lobes of female salivary gland (at protein level). Not detected in male salivary gland (at protein level). Expressed in female salivary gland. Not detected in female carcass without salivary glands. Expressed in male salivary gland and other tissues.

It is found in the secreted. In terms of biological role, modulates blood feeding of female mosquitoes on vertebrate species by binding and sequestering different mediators involved in the host response. Binds leukotriene C4, leukotriene D4, leukotriene E4 and stable analogs of thromboxane A2, U-46619 and carbocyclic TXA2. Binds weakly prostaglandins: PGD2, PGE2 and PGF2alpha. Does not bind leukotriene B4, biogenic amines, ADP, platelet activating phospholipid derivative PAF and arachidonic acid. Inhibits agonist-induced smooth muscle contraction. Inhibits platelet aggregation induced by low concentrations of collagen in thromboxane A2-dependent manner. The protein is Long form salivary protein D7L1 of Anopheles stephensi (Indo-Pakistan malaria mosquito).